Here is a 91-residue protein sequence, read N- to C-terminus: Small ribosomal subunit protein bS20 (91 aa).

The segment at 1-23 (MANTPSAKKRAKQAEKRRSHNAS) is disordered. The span at 7 to 20 (AKKRAKQAEKRRSH) shows a compositional bias: basic residues.

It belongs to the bacterial ribosomal protein bS20 family.

Its function is as follows. Binds directly to 16S ribosomal RNA. The polypeptide is Small ribosomal subunit protein bS20 (Pseudomonas aeruginosa (strain LESB58)).